Reading from the N-terminus, the 116-residue chain is Large ribosomal subunit protein uL22 (116 aa).

This sequence belongs to the universal ribosomal protein uL22 family. As to quaternary structure, part of the 50S ribosomal subunit.

In terms of biological role, this protein binds specifically to 23S rRNA; its binding is stimulated by other ribosomal proteins, e.g. L4, L17, and L20. It is important during the early stages of 50S assembly. It makes multiple contacts with different domains of the 23S rRNA in the assembled 50S subunit and ribosome. The globular domain of the protein is located near the polypeptide exit tunnel on the outside of the subunit, while an extended beta-hairpin is found that lines the wall of the exit tunnel in the center of the 70S ribosome. The sequence is that of Large ribosomal subunit protein uL22 from Leptospira biflexa serovar Patoc (strain Patoc 1 / Ames).